The sequence spans 186 residues: ATP synthase subunit delta (186 aa).

Belongs to the ATPase delta chain family. F-type ATPases have 2 components, F(1) - the catalytic core - and F(0) - the membrane proton channel. F(1) has five subunits: alpha(3), beta(3), gamma(1), delta(1), epsilon(1). CF(0) has four main subunits: a(1), b(1), b'(1) and c(10-14). The alpha and beta chains form an alternating ring which encloses part of the gamma chain. F(1) is attached to F(0) by a central stalk formed by the gamma and epsilon chains, while a peripheral stalk is formed by the delta, b and b' chains.

It localises to the cell inner membrane. Functionally, f(1)F(0) ATP synthase produces ATP from ADP in the presence of a proton or sodium gradient. F-type ATPases consist of two structural domains, F(1) containing the extramembraneous catalytic core and F(0) containing the membrane proton channel, linked together by a central stalk and a peripheral stalk. During catalysis, ATP synthesis in the catalytic domain of F(1) is coupled via a rotary mechanism of the central stalk subunits to proton translocation. Its function is as follows. This protein is part of the stalk that links CF(0) to CF(1). It either transmits conformational changes from CF(0) to CF(1) or is implicated in proton conduction. This chain is ATP synthase subunit delta, found in Rhodopseudomonas palustris (strain ATCC BAA-98 / CGA009).